A 260-amino-acid chain; its full sequence is Thiazole synthase (260 aa).

The active-site Schiff-base intermediate with DXP is Lys96. Residues Gly157, 184-185 (AG), and 206-207 (NT) each bind 1-deoxy-D-xylulose 5-phosphate.

The protein belongs to the ThiG family. Homotetramer. Forms heterodimers with either ThiH or ThiS.

The protein resides in the cytoplasm. The enzyme catalyses [ThiS sulfur-carrier protein]-C-terminal-Gly-aminoethanethioate + 2-iminoacetate + 1-deoxy-D-xylulose 5-phosphate = [ThiS sulfur-carrier protein]-C-terminal Gly-Gly + 2-[(2R,5Z)-2-carboxy-4-methylthiazol-5(2H)-ylidene]ethyl phosphate + 2 H2O + H(+). Its pathway is cofactor biosynthesis; thiamine diphosphate biosynthesis. Catalyzes the rearrangement of 1-deoxy-D-xylulose 5-phosphate (DXP) to produce the thiazole phosphate moiety of thiamine. Sulfur is provided by the thiocarboxylate moiety of the carrier protein ThiS. In vitro, sulfur can be provided by H(2)S. The polypeptide is Thiazole synthase (Rhodopseudomonas palustris (strain BisA53)).